A 553-amino-acid polypeptide reads, in one-letter code: Protein PALS2 (553 aa).

L27 domains lie at 1–48 and 49–107; these read MQQV…EDSK and LEAV…YDSP. Residues 129 to 208 form the PDZ domain; it reads ILGIHKKAGE…SVTLKILPSY (80 aa). In terms of domain architecture, SH3 spans 228 to 297; that stretch reads VRQVFVKCHF…PSQFLEEKRK (70 aa). The Guanylate kinase-like domain occupies 351-538; sequence RKTLVLIGAQ…AFEKLQTAIE (188 aa). Tyrosine 513 carries the phosphotyrosine modification.

This sequence belongs to the MAGUK family. Interacts with CADM1. Interacts with the LIN7 proteins.

The protein localises to the membrane. In Mus musculus (Mouse), this protein is Protein PALS2.